A 311-amino-acid chain; its full sequence is MKVAVLGAAGGIGQALALLLKTQLPAGSKLSLYDIAPVTPGVAVDLSHIPTAVEIKGFAGEDPTPALEGADVVLISAGVARKPGMDRSDLFNINAGIVRNLIEKVAVTCPKALVGIITNPVNTTVAIAAEVLKKAGVYDKNRLFGVTTLDVIRSETFIAELKGLNVADVKVNVIGGHSGVTILPLLSQVEGVTFSDEEVASLTKRIQNAGTEVVEAKAGGGSATLSMGQAACRFGMSLVRGLQGEANIVECAYVDGGSEHAEFFAQPVLLGKNGIEKVLPYGEVSAFEANARDSMLDTLKGDIKLGVDFVK.

NAD(+) is bound by residues 7–13 (GAAGGIG) and aspartate 34. 2 residues coordinate substrate: arginine 81 and arginine 87. NAD(+) contacts are provided by residues asparagine 94 and 117-119 (ITN). Substrate contacts are provided by asparagine 119 and arginine 153. Histidine 177 functions as the Proton acceptor in the catalytic mechanism. Methionine 227 lines the NAD(+) pocket.

It belongs to the LDH/MDH superfamily. MDH type 1 family. Homodimer.

It catalyses the reaction (S)-malate + NAD(+) = oxaloacetate + NADH + H(+). Catalyzes the reversible oxidation of malate to oxaloacetate. In Shewanella sp. (strain ANA-3), this protein is Malate dehydrogenase.